The chain runs to 402 residues: F-box protein At4g22390 (402 aa).

Positions 1–49 (MAECPTDLINEMFLRLRATTLVKCRVLSKPCFSLIDSPEFVSSHLRRRL) constitute an F-box domain.

This Arabidopsis thaliana (Mouse-ear cress) protein is F-box protein At4g22390.